The chain runs to 408 residues: LL-diaminopimelate aminotransferase (408 aa).

Substrate contacts are provided by Y15 and G42. Pyridoxal 5'-phosphate contacts are provided by residues Y72, 108 to 109, Y132, N187, Y218, and 246 to 248; these read SK and SFS. Substrate-binding residues include K109, Y132, and N187. K249 carries the post-translational modification N6-(pyridoxal phosphate)lysine. Pyridoxal 5'-phosphate contacts are provided by R257 and N292. N292 and R388 together coordinate substrate.

Belongs to the class-I pyridoxal-phosphate-dependent aminotransferase family. LL-diaminopimelate aminotransferase subfamily. As to quaternary structure, homodimer. It depends on pyridoxal 5'-phosphate as a cofactor.

It carries out the reaction (2S,6S)-2,6-diaminopimelate + 2-oxoglutarate = (S)-2,3,4,5-tetrahydrodipicolinate + L-glutamate + H2O + H(+). The protein operates within amino-acid biosynthesis; L-lysine biosynthesis via DAP pathway; LL-2,6-diaminopimelate from (S)-tetrahydrodipicolinate (aminotransferase route): step 1/1. Its function is as follows. Involved in the synthesis of meso-diaminopimelate (m-DAP or DL-DAP), required for both lysine and peptidoglycan biosynthesis. Catalyzes the direct conversion of tetrahydrodipicolinate to LL-diaminopimelate. The sequence is that of LL-diaminopimelate aminotransferase from Leptospira interrogans serogroup Icterohaemorrhagiae serovar Lai (strain 56601).